A 371-amino-acid chain; its full sequence is 4-hydroxy-3-methylbut-2-en-1-yl diphosphate synthase (flavodoxin) (371 aa).

Cysteine 270, cysteine 273, cysteine 305, and glutamate 312 together coordinate [4Fe-4S] cluster.

It belongs to the IspG family. It depends on [4Fe-4S] cluster as a cofactor.

It catalyses the reaction (2E)-4-hydroxy-3-methylbut-2-enyl diphosphate + oxidized [flavodoxin] + H2O + 2 H(+) = 2-C-methyl-D-erythritol 2,4-cyclic diphosphate + reduced [flavodoxin]. It participates in isoprenoid biosynthesis; isopentenyl diphosphate biosynthesis via DXP pathway; isopentenyl diphosphate from 1-deoxy-D-xylulose 5-phosphate: step 5/6. Functionally, converts 2C-methyl-D-erythritol 2,4-cyclodiphosphate (ME-2,4cPP) into 1-hydroxy-2-methyl-2-(E)-butenyl 4-diphosphate. This is 4-hydroxy-3-methylbut-2-en-1-yl diphosphate synthase (flavodoxin) from Shewanella denitrificans (strain OS217 / ATCC BAA-1090 / DSM 15013).